The chain runs to 1747 residues: E3 ubiquitin-protein ligase listerin (1747 aa).

Residues 1 to 24 (MGGKTKQAPRTKNNAKPSSSSRTA) form a disordered region. The segment covering 8-24 (APRTKNNAKPSSSSRTA) has biased composition (polar residues). HEAT repeat units lie at residues 65-102 (AAIS…QSDV), 106-144 (KNIL…KCKK), 346-383 (NIRK…KVTQ), 424-461 (NAYF…NVLE), and 508-547 (KFWI…ANPS). The residue at position 566 (Ser566) is a Phosphoserine. HEAT repeat units lie at residues 612–653 (SRYI…LLGQ), 664–711 (EIVF…CAEA), 789–825 (SFIA…EHRP), 952–989 (LSRN…DPED), 1005–1042 (KWNE…ELVL), 1053–1090 (GNSS…FCPQ), 1129–1166 (KLSQ…NFEG), 1216–1258 (VEFI…SIAQ), 1269–1307 (VAVY…LFAK), 1330–1363 (FQAC…NSNI), 1364–1400 (TLDH…HFVA), and 1500–1539 (ENFL…QKDR). The segment at 1697–1744 (CYVCYTVIHQETCQLPKLTCKTCKKKFHGPCLYKWFTTSSKSTCPICR) adopts an RING-type zinc-finger fold.

The protein belongs to the LTN1 family. As to quaternary structure, component of the ribosome quality control complex (RQC), composed of at least the E3 ubiquitin ligase l(3)76BDr/LTN1 and Clbn/NEMF. The complex probably also contains TCF25 as well as TER94/VCP and its ubiquitin-binding cofactors. RQC forms a stable complex with 60S ribosomal subunits.

The protein localises to the cytoplasm. Its subcellular location is the cytosol. The catalysed reaction is S-ubiquitinyl-[E2 ubiquitin-conjugating enzyme]-L-cysteine + [acceptor protein]-L-lysine = [E2 ubiquitin-conjugating enzyme]-L-cysteine + N(6)-ubiquitinyl-[acceptor protein]-L-lysine.. It participates in protein modification; protein ubiquitination. In terms of biological role, E3 ubiquitin-protein ligase component of the ribosome quality control complex (RQC), a ribosome-associated complex that mediates ubiquitination and extraction of incompletely synthesized nascent chains for proteasomal degradation. Ubiquitination leads to TER94/VCP recruitment for extraction and degradation of the incomplete translation product. This is E3 ubiquitin-protein ligase listerin from Drosophila melanogaster (Fruit fly).